Consider the following 115-residue polypeptide: Con-Ins T1B (115 aa).

Residues 1–24 (MTTSFYFLLMALGLLLYVCQSSFG) form the signal peptide. The propeptide occupies 25–29 (NQHTR). At proline 34 the chain carries 4-hydroxyproline; partial. Cystine bridges form between cysteine 38–cysteine 101, cysteine 50–cysteine 114, and cysteine 100–cysteine 105. Positions 52-94 (RKRNDAGKKRGQASPLWQRGGSLSMLKARAKRNEAFHLQRAHR) are cleaved as a propeptide — c peptide. Glutamate 98 carries the 4-carboxyglutamate modification. Proline 104 bears the 4-hydroxyproline; partial mark. Glutamate 109 is modified (4-carboxyglutamate; partial). Residue cysteine 114 is modified to Cysteine amide.

Belongs to the insulin family. Heterodimer of A and B chains; disulfide-linked. Expressed by the venom gland.

The protein resides in the secreted. This venom insulin, from a fish-hunting cone snail, facilitates prey capture by rapidly inducing hypoglycemic shock. It is one of the smallest known insulin found in nature and lacks the C-terminal segment of the B chain that, in human insulin, mediates engagement of the insulin receptor (INSR) and assembly of the hormone's hexameric storage form. Despite lacking this segment, it both binds and activates human insulin receptor (long isoform (HIR-B) of INSR) with a high potency (EC(50)=12.0 nM). In vivo, intraperitoneal injection of this peptide into zebrafish lowers blood glucose with a lower potency than human insulin. In addition, when applied to water, this peptide reduces overall locomotor activity of zebrafish larvae, observed as a significant decrease in the percentage of time spent swimming and movement frequency. When tested on a mouse model of diabetes, this insulin also lowers blood glucose with a 10-fold lower potency than human insulin. In Conus tulipa (Fish-hunting cone snail), this protein is Con-Ins T1B.